The sequence spans 191 residues: Cell division protein SepF (191 aa).

A compositionally biased stretch (polar residues) spans 153-178 (FPEEVSPSNISSKKTSPYSLETNTTP). The disordered stretch occupies residues 153–191 (FPEEVSPSNISSKKTSPYSLETNTTPEPAWGESKLSAFS).

Belongs to the SepF family. As to quaternary structure, homodimer. Interacts with FtsZ.

The protein resides in the cytoplasm. Cell division protein that is part of the divisome complex and is recruited early to the Z-ring. Probably stimulates Z-ring formation, perhaps through the cross-linking of FtsZ protofilaments. Its function overlaps with FtsA. The sequence is that of Cell division protein SepF from Prochlorococcus marinus (strain MIT 9515).